A 119-amino-acid polypeptide reads, in one-letter code: Urease subunit beta (119 aa).

The protein belongs to the urease beta subunit family. As to quaternary structure, heterotrimer of UreA (gamma), UreB (beta) and UreC (alpha) subunits. Three heterotrimers associate to form the active enzyme.

The protein localises to the cytoplasm. It carries out the reaction urea + 2 H2O + H(+) = hydrogencarbonate + 2 NH4(+). The protein operates within nitrogen metabolism; urea degradation; CO(2) and NH(3) from urea (urease route): step 1/1. This chain is Urease subunit beta, found in Tolumonas auensis (strain DSM 9187 / NBRC 110442 / TA 4).